Here is a 370-residue protein sequence, read N- to C-terminus: Binary larvicide subunit BinA (370 aa).

The propeptide occupies 1-6; it reads MRNLDF. The tract at residues 1-155 is beta-trefoil domain; the sequence is MRNLDFIDSF…LISNKEQIYL (155 aa). The cysteines at positions 31 and 47 are disulfide-linked. The tract at residues 156–370 is pore-forming domain; the sequence is TLPSLPENEQ…NTKIITDDQN (215 aa).

The protein belongs to the toxin_10 family. Forms a heterodimer with BinB. In terms of processing, processed by proteases in the mosquito gut, probably at both the N- and C-termini.

The protein localises to the spore. Its subcellular location is the perispore. Its function is as follows. Component of a binary toxin active against Culex and some Aedes mosquito larvae. The individual subunits are not toxic. BinAB binds to the gastric caecum and posterior midgut of C.quinquefasciatus larvae; this subunit alone binds the entire larval gut. Binary toxin internalization into host gut cells requires both proteins. Toxic to Aedes atropalpus mosquito larvae; mortality towards both C.quinquefasciatus and A.atropalpus is maximal by 48 hours. A.aegypti is not very susceptible to this toxin. In Lysinibacillus sphaericus (Bacillus sphaericus), this protein is Binary larvicide subunit BinA (binA).